Consider the following 393-residue polypeptide: Prokineticin receptor 1 (393 aa).

The Extracellular segment spans residues 1–63; that stretch reads MEITMGVMDE…NSRTFFAAKI (63 aa). 3 N-linked (GlcNAc...) asparagine glycosylation sites follow: Asn-11, Asn-14, and Asn-36. A helical membrane pass occupies residues 64–84; the sequence is VIGMALVGIMLVCGIGNFIFI. Residues 85-98 are Cytoplasmic-facing; it reads AALARYKKLRNLTN. The chain crosses the membrane as a helical span at residues 99 to 119; sequence LLIANLAISDFLVAIVCCPFE. At 120 to 145 the chain is on the extracellular side; it reads MDYYVVRQLSWEHGHVLCASVNYLRT. A disulfide bridge links Cys-137 with Cys-217. The chain crosses the membrane as a helical span at residues 146–166; it reads VSLYVSTNALLAIAIDRYLAI. Topologically, residues 167–179 are cytoplasmic; the sequence is VHPLRPRMKYQTA. The chain crosses the membrane as a helical span at residues 180 to 200; sequence TGLIALVWVVSILVAIPSAYF. Over 201 to 232 the chain is Extracellular; the sequence is TTETVLVIVKSQEKIFCGQIWPVDQQIYYKSY. Residues 233–253 form a helical membrane-spanning segment; that stretch reads FLFIFGIEFVGPVVTMTLCYA. At 254–282 the chain is on the cytoplasmic side; the sequence is RISRELWFKAVPGFQTEQIRKRLRCRRKT. A helical membrane pass occupies residues 283 to 303; that stretch reads VLVLMCILTAYVLCWAPFYGF. Residues 304–322 lie on the Extracellular side of the membrane; sequence AIVRDFFPTVFVKEKHYLT. A helical membrane pass occupies residues 323 to 343; the sequence is AFYVVECIAMSNSMINTVCFV. The Cytoplasmic segment spans residues 344–393; that stretch reads TVKNNTIKYFKKIMLLHWKASYNGSKSSGDLDLKTTGVPATEEVDCIGLK.

This sequence belongs to the G-protein coupled receptor 1 family.

It localises to the cell membrane. Functionally, receptor for prokineticin 1. Exclusively coupled to the G(q) subclass of heteromeric G proteins. Activation leads to mobilization of calcium, stimulation of phosphoinositide turnover and activation of p44/p42 mitogen-activated protein kinase. May play a role during early pregnancy. The polypeptide is Prokineticin receptor 1 (PROKR1) (Bos taurus (Bovine)).